A 100-amino-acid polypeptide reads, in one-letter code: MLVLVFLIGLSACFYVYYKVKGVRAKPSLAKEICSAKSSMALGSLVLFYGLNQMILFHSVLTLVIGGIFIVIGAGSAWAGYKAFRHYNPLHAKEAERDHA.

2 consecutive transmembrane segments (helical) span residues 1-21 (MLVL…YKVK) and 54-74 (MILF…VIGA).

It is found in the cell membrane. This is an uncharacterized protein from Bacillus subtilis (strain 168).